A 223-amino-acid chain; its full sequence is MSEQTLDNNKAIVVFSGGQDSTTCLFWAKKHFESVELVTFAYGQRHDTEIEVAKQIADEQGVKHHLLDMSLLSQLTPNALTQHDLDIEVGDDGIPNTFVPARNLLFLSFAGALAYQTNAKHIITGVCETDFSGYPDCRDSFVKSMNVTLSLSMDKDFVIHTPLMWLDKKATWALSDDLGVLDYIRYNTLTCYNGVIGDGCGECPACQLRANGLNAYLAEKGVD.

15 to 25 contacts ATP; it reads FSGGQDSTTCL. Residues C191, C200, C203, and C206 each contribute to the Zn(2+) site.

The protein belongs to the QueC family. In terms of assembly, homodimer. It depends on Zn(2+) as a cofactor.

The enzyme catalyses 7-carboxy-7-deazaguanine + NH4(+) + ATP = 7-cyano-7-deazaguanine + ADP + phosphate + H2O + H(+). It functions in the pathway purine metabolism; 7-cyano-7-deazaguanine biosynthesis. Catalyzes the ATP-dependent conversion of 7-carboxy-7-deazaguanine (CDG) to 7-cyano-7-deazaguanine (preQ(0)). In Staphylococcus saprophyticus subsp. saprophyticus (strain ATCC 15305 / DSM 20229 / NCIMB 8711 / NCTC 7292 / S-41), this protein is 7-cyano-7-deazaguanine synthase.